Consider the following 399-residue polypeptide: MLKEAISEIQRGCAEIIDEPRVEKLLKAYFEKGETYTVKAGFDPTAPDLHLGHTVLLQKLAIFQKYGARVQFLIGDFTAQIGDPSGKSATRKILSTEDILENAKSYKEQVFKILDASKTDVVFNSEWLNALGASGMITLTTTFNVARMLERDDFDKRYKSGTSIAISEFLYPLLQGYDSVHLKSDIEVGGTDQKFNLLMGRHLQRSYDVGKEQAVLMVPILEGLDGVQKMSKSLGNYIGVSENPNEIFGKVLSISDELMWRYYELLSTKTLAEIERLKSGVEAGTLHPKKVKEELAIEITARFHSSESAQNAKDEFDRVHSNNQIPTEMDEFSSSEAISITKALVDCNLTPSTSQARRDIKQGAVRINQEKIDDETLSLESGEYILQVGKRKFAKLKVN.

Positions 44–53 match the 'HIGH' region motif; the sequence is PTAPDLHLGH. The short motif at 229-233 is the 'KMSKS' region element; the sequence is KMSKS. K232 is a binding site for ATP. The S4 RNA-binding domain occupies 338-398; sequence ISITKALVDC…GKRKFAKLKV (61 aa).

It belongs to the class-I aminoacyl-tRNA synthetase family. TyrS type 2 subfamily. Homodimer.

It localises to the cytoplasm. It carries out the reaction tRNA(Tyr) + L-tyrosine + ATP = L-tyrosyl-tRNA(Tyr) + AMP + diphosphate + H(+). Catalyzes the attachment of tyrosine to tRNA(Tyr) in a two-step reaction: tyrosine is first activated by ATP to form Tyr-AMP and then transferred to the acceptor end of tRNA(Tyr). In Sulfurimonas denitrificans (strain ATCC 33889 / DSM 1251) (Thiomicrospira denitrificans (strain ATCC 33889 / DSM 1251)), this protein is Tyrosine--tRNA ligase.